A 407-amino-acid polypeptide reads, in one-letter code: Putative F-box protein At2g16220 (407 aa).

The F-box domain occupies 1–45 (MNSHFLTNDLILEVLSRLPLKSVARFHCVSKRWASMFGSPYFKEL). A disordered region spans residues 385-407 (PPSVQPEYDESDSESEEDREIII). A compositionally biased stretch (acidic residues) spans 391–407 (EYDESDSESEEDREIII).

In Arabidopsis thaliana (Mouse-ear cress), this protein is Putative F-box protein At2g16220.